Here is a 133-residue protein sequence, read N- to C-terminus: Ribonuclease VapC17 (133 aa).

Residues Asp-7 and Asp-93 each contribute to the Mg(2+) site. The 89-residue stretch at 30–118 folds into the PINc domain; it reads AICDIGELEW…HHDRDYKRIA (89 aa).

Belongs to the PINc/VapC protein family. It depends on Mg(2+) as a cofactor.

Functionally, toxic component of a type II toxin-antitoxin (TA) system. An RNase. The cognate antitoxin is VapB17. This chain is Ribonuclease VapC17, found in Mycobacterium tuberculosis (strain CDC 1551 / Oshkosh).